A 242-amino-acid polypeptide reads, in one-letter code: UPF0246 protein SSA_1395 (242 aa).

Belongs to the UPF0246 family.

The protein is UPF0246 protein SSA_1395 of Streptococcus sanguinis (strain SK36).